Here is a 684-residue protein sequence, read N- to C-terminus: ATP-dependent DNA helicase RecG (684 aa).

The wedge domain stretch occupies residues 51–148; it reads RHIASMATLQ…ADVPQFQAPH (98 aa). The 162-residue stretch at 278-439 folds into the Helicase ATP-binding domain; the sequence is DLARHRPMRR…VHADLEVSVI (162 aa). 291 to 298 is a binding site for ATP; it reads GDVGSGKT. A DEAH box motif is present at residues 392 to 395; sequence DEQH.

It belongs to the helicase family. RecG subfamily. In terms of assembly, monomer.

The enzyme catalyses Couples ATP hydrolysis with the unwinding of duplex DNA by translocating in the 3'-5' direction.. The catalysed reaction is ATP + H2O = ADP + phosphate + H(+). Functionally, plays a critical role in recombination and DNA repair. Helps process Holliday junction intermediates to mature products by catalyzing branch migration. Has replication fork regression activity, unwinds stalled or blocked replication forks to make a HJ that can be resolved. Has a DNA unwinding activity characteristic of a DNA helicase with 3'-5' polarity. The protein is ATP-dependent DNA helicase RecG of Acidithiobacillus ferridurans.